We begin with the raw amino-acid sequence, 275 residues long: MSFIKETKKWYFIFLAVWTLIADVPFLFMLFTSFKTQSELLSGNTWQIPRQPTIGNFSTVLEGNFFTYLKNSVIAVSISVVLILIISSMAAFAFSRFKFALNNLLYSLIIAGMAIPIHVTLIPIYVLTNKIKLYDTVFALIGPYVALSLPMSIFILTEFMREIPLELEEAAKIDGCSMFRLYSDILLPLSAPALITVGIYNGTYLWNEFVFALVLTSSPTRRTLPLGIWDFQARYGSDIPAIMAFLTLSLLPMLIAYIFGQDKIIKGMMAGAVKG.

A run of 6 helical transmembrane segments spans residues 11–31 (YFIFLAVWTLIADVPFLFMLF), 74–94 (IAVSISVVLILIISSMAAFAF), 108–128 (LIIAGMAIPIHVTLIPIYVLT), 136–156 (TVFALIGPYVALSLPMSIFIL), 185–205 (ILLPLSAPALITVGIYNGTYL), and 239–259 (IPAIMAFLTLSLLPMLIAYIF). Residues 69 to 260 (LKNSVIAVSI…LPMLIAYIFG (192 aa)) form the ABC transmembrane type-1 domain.

Belongs to the binding-protein-dependent transport system permease family. MalFG subfamily.

The protein localises to the cell membrane. The protein is Putative ABC transporter permease protein ORF2 of Caldicellulosiruptor sp. (strain Rt8B.4).